We begin with the raw amino-acid sequence, 187 residues long: Large ribosomal subunit protein uL10 (187 aa).

Belongs to the universal ribosomal protein uL10 family. In terms of assembly, part of the ribosomal stalk of the 50S ribosomal subunit. The N-terminus interacts with L11 and the large rRNA to form the base of the stalk. The C-terminus forms an elongated spine to which L12 dimers bind in a sequential fashion forming a multimeric L10(L12)X complex.

Functionally, forms part of the ribosomal stalk, playing a central role in the interaction of the ribosome with GTP-bound translation factors. The polypeptide is Large ribosomal subunit protein uL10 (Roseiflexus castenholzii (strain DSM 13941 / HLO8)).